A 132-amino-acid chain; its full sequence is Small ribosomal subunit protein uS11 (132 aa).

Belongs to the universal ribosomal protein uS11 family. Part of the 30S ribosomal subunit. Interacts with proteins S7 and S18. Binds to IF-3.

Functionally, located on the platform of the 30S subunit, it bridges several disparate RNA helices of the 16S rRNA. Forms part of the Shine-Dalgarno cleft in the 70S ribosome. The sequence is that of Small ribosomal subunit protein uS11 from Chlamydia muridarum (strain MoPn / Nigg).